Reading from the N-terminus, the 309-residue chain is Protease HtpX homolog (309 aa).

Helical transmembrane passes span 7–27 (AILLAGLTALFMGVGYLIGGA) and 28–48 (SGAMIALVVAAATNIFAYWNS). His130 is a Zn(2+) binding site. Glu131 is an active-site residue. Position 134 (His134) interacts with Zn(2+). A run of 2 helical transmembrane segments spans residues 145–165 (VTATIAGAVSMLAQFGMFFGG) and 173–193 (GLGVIGSIAMMILAPIAAMLV). Glu202 provides a ligand contact to Zn(2+).

This sequence belongs to the peptidase M48B family. Requires Zn(2+) as cofactor.

Its subcellular location is the cell inner membrane. The protein is Protease HtpX homolog of Rhodopseudomonas palustris (strain BisA53).